The primary structure comprises 58 residues: Small ribosomal subunit protein bS21 (58 aa).

The interval 25-58 (SKSGTLQEYRKREHYEKPSVKRKKKSEAARKRKF) is disordered. Positions 32–43 (EYRKREHYEKPS) are enriched in basic and acidic residues. Positions 44–58 (VKRKKKSEAARKRKF) are enriched in basic residues.

The protein belongs to the bacterial ribosomal protein bS21 family.

In Oceanobacillus iheyensis (strain DSM 14371 / CIP 107618 / JCM 11309 / KCTC 3954 / HTE831), this protein is Small ribosomal subunit protein bS21.